Reading from the N-terminus, the 147-residue chain is Ribosome-binding factor A (147 aa).

Positions 127–147 (AAEARHAGEPDPYKTDRDDAE) are disordered.

This sequence belongs to the RbfA family. Monomer. Binds 30S ribosomal subunits, but not 50S ribosomal subunits or 70S ribosomes.

It localises to the cytoplasm. Its function is as follows. One of several proteins that assist in the late maturation steps of the functional core of the 30S ribosomal subunit. Associates with free 30S ribosomal subunits (but not with 30S subunits that are part of 70S ribosomes or polysomes). Required for efficient processing of 16S rRNA. May interact with the 5'-terminal helix region of 16S rRNA. The chain is Ribosome-binding factor A from Nocardia farcinica (strain IFM 10152).